A 635-amino-acid polypeptide reads, in one-letter code: Sodium- and chloride-dependent creatine transporter 1 (635 aa).

The tract at residues 1-27 is disordered; that stretch reads MAKKSAENGIYSVSGDEKKGPLIVSGP. At 1 to 60 the chain is on the cytoplasmic side; it reads MAKKSAENGIYSVSGDEKKGPLIVSGPDGAPAKGDGPAGLGAPGGRLAVPPRETWTRQMD. Residues 61 to 81 form a helical membrane-spanning segment; that stretch reads FIMSCVGFAVGLGNVWRFPYL. Topologically, residues 82–87 are extracellular; it reads CYKNGG. Residues 88–108 traverse the membrane as a helical segment; sequence GVFLIPYVLIALVGGIPIFFL. Residues 109-138 lie on the Cytoplasmic side of the membrane; sequence EISLGQFMKAGSINVWNICPLFKGLGYASM. The helical transmembrane segment at 139 to 159 threads the bilayer; the sequence is VIVFYCNTYYIMVLAWGFYYL. Topologically, residues 160–230 are extracellular; it reads VKSFTTTLPW…LSTGLEVPGA (71 aa). N-linked (GlcNAc...) asparagine glycans are attached at residues N192 and N197. Residues 231-251 traverse the membrane as a helical segment; it reads LNWEVTLCLLACWVLVYFCVW. Topologically, residues 252–269 are cytoplasmic; sequence KGVKSTGKIVYFTATFPY. The helical transmembrane segment at 270–290 threads the bilayer; that stretch reads VVLVVLLVRGVLLPGALDGII. The Extracellular segment spans residues 291-304; sequence YYLKPDWSKLGSPQ. A helical transmembrane segment spans residues 305–325; that stretch reads VWIDAGTQIFFSYAIGLGALT. Over 326–341 the chain is Cytoplasmic; that stretch reads ALGSYNRFNNNCYKDA. Residues 342 to 362 traverse the membrane as a helical segment; that stretch reads IILALINSGTSFFAGFVVFSI. At 363–394 the chain is on the extracellular side; that stretch reads LGFMATEQGVHISKVAESGPGLAFIAYPRAVT. Residues 395 to 415 form a helical membrane-spanning segment; sequence LMPVAPLWAALFFFMLLLLGL. Residues 416–444 lie on the Cytoplasmic side of the membrane; the sequence is DSQFVGVEGFITGLLDLLPASYYFRFQRE. A helical membrane pass occupies residues 445 to 465; that stretch reads ISVALCCALCFVIDLSMVTDG. Residues 466–479 are Extracellular-facing; that stretch reads GMYVFQLFDYYSAS. Residues 480–500 form a helical membrane-spanning segment; the sequence is GTTLLWQAFWECVVVAWVYGA. The Cytoplasmic segment spans residues 501-520; that stretch reads DRFMDDIACMIGYRPCPWMK. The helical transmembrane segment at 521–541 threads the bilayer; it reads WCWSFFTPLVCMGIFIFNIVY. Residues 542 to 560 lie on the Extracellular side of the membrane; that stretch reads YEPLVYNNTYVYPWWGEAM. Residue N548 is glycosylated (N-linked (GlcNAc...) asparagine). The chain crosses the membrane as a helical span at residues 561–581; it reads GWAFALSSMLCVPLHLLGCLL. Over 582–635 the chain is Cytoplasmic; the sequence is RAKGTMAERWQHLTQPIWGLHHLEYRAQDADVRGLTTLTPVSESSKVVVVESVM. Phosphothreonine is present on residues T617 and T620. S623 is modified (phosphoserine).

Belongs to the sodium:neurotransmitter symporter (SNF) (TC 2.A.22) family. SLC6A8 subfamily. Post-translationally, glycosylated. In terms of tissue distribution, brain. Highly expressed in brain capillaries branching in all cortical layers and moderately expressed in neuronal perikarya (at protein level).

The protein resides in the cell membrane. Its subcellular location is the apical cell membrane. The enzyme catalyses creatine(out) + chloride(out) + 2 Na(+)(out) = creatine(in) + chloride(in) + 2 Na(+)(in). Functionally, creatine:sodium symporter which mediates the uptake of creatine. Plays an important role in supplying creatine to the brain via the blood-brain barrier. This chain is Sodium- and chloride-dependent creatine transporter 1 (Slc6a8), found in Mus musculus (Mouse).